Reading from the N-terminus, the 207-residue chain is Ribonuclease HII (207 aa).

Residues 10-199 (RLIAGVDEVG…VRNALLDAEL (190 aa)) enclose the RNase H type-2 domain. Positions 16, 17, and 108 each coordinate a divalent metal cation.

This sequence belongs to the RNase HII family. Requires Mn(2+) as cofactor. Mg(2+) serves as cofactor.

The protein localises to the cytoplasm. The enzyme catalyses Endonucleolytic cleavage to 5'-phosphomonoester.. In terms of biological role, endonuclease that specifically degrades the RNA of RNA-DNA hybrids. This Erwinia tasmaniensis (strain DSM 17950 / CFBP 7177 / CIP 109463 / NCPPB 4357 / Et1/99) protein is Ribonuclease HII.